The sequence spans 427 residues: Serine hydroxymethyltransferase (427 aa).

(6S)-5,6,7,8-tetrahydrofolate is bound by residues L122 and 126-128; that span reads GHL. N6-(pyridoxal phosphate)lysine is present on K231. Residues E247 and 355-357 contribute to the (6S)-5,6,7,8-tetrahydrofolate site; that span reads SPF.

It belongs to the SHMT family. As to quaternary structure, homodimer. Pyridoxal 5'-phosphate serves as cofactor.

Its subcellular location is the cytoplasm. It carries out the reaction (6R)-5,10-methylene-5,6,7,8-tetrahydrofolate + glycine + H2O = (6S)-5,6,7,8-tetrahydrofolate + L-serine. It participates in one-carbon metabolism; tetrahydrofolate interconversion. Its pathway is amino-acid biosynthesis; glycine biosynthesis; glycine from L-serine: step 1/1. Catalyzes the reversible interconversion of serine and glycine with tetrahydrofolate (THF) serving as the one-carbon carrier. This reaction serves as the major source of one-carbon groups required for the biosynthesis of purines, thymidylate, methionine, and other important biomolecules. Also exhibits THF-independent aldolase activity toward beta-hydroxyamino acids, producing glycine and aldehydes, via a retro-aldol mechanism. In Synechocystis sp. (strain ATCC 27184 / PCC 6803 / Kazusa), this protein is Serine hydroxymethyltransferase.